We begin with the raw amino-acid sequence, 1093 residues long: ATP-dependent helicase/deoxyribonuclease subunit B (1093 aa).

The protein belongs to the helicase family. AddB/RexB type 2 subfamily. Heterodimer of AddA and RexB. Requires Mg(2+) as cofactor.

In terms of biological role, the heterodimer acts as both an ATP-dependent DNA helicase and an ATP-dependent, dual-direction single-stranded exonuclease. Recognizes the chi site generating a DNA molecule suitable for the initiation of homologous recombination. This subunit has 5' -&gt; 3' nuclease activity but not helicase activity. The polypeptide is ATP-dependent helicase/deoxyribonuclease subunit B (Streptococcus sanguinis (strain SK36)).